The chain runs to 167 residues: Small ribosomal subunit protein uS5 (167 aa).

The S5 DRBM domain occupies 12–75 (LEDNVVAINR…EAARKNLIEV (64 aa)).

It belongs to the universal ribosomal protein uS5 family. As to quaternary structure, part of the 30S ribosomal subunit. Contacts proteins S4 and S8.

Its function is as follows. With S4 and S12 plays an important role in translational accuracy. In terms of biological role, located at the back of the 30S subunit body where it stabilizes the conformation of the head with respect to the body. In Levilactobacillus brevis (strain ATCC 367 / BCRC 12310 / CIP 105137 / JCM 1170 / LMG 11437 / NCIMB 947 / NCTC 947) (Lactobacillus brevis), this protein is Small ribosomal subunit protein uS5.